We begin with the raw amino-acid sequence, 2062 residues long: MDSFFPEGARVWLRENGQHFPSTVNSCAEGVVVFQTDYGQVFTYKQSTITNQKVTAMHPLHEEGVDDMASLAELHGGSIMYNLFQRYKRNQIYTYIGSIIASVNPYQPIAGLYERATMEEYSRCHLGELPPHIFAIANECYRCLWKRHDNQCVLISGESGAGKTESTKLILKFLSVISQQTLDLGLQEKTSSVEQAILQSSPIMEAFGNAKTVYNNNSSRFGKFVQLNICQQGNIQGGRIVDYLLEKNRVVRQNPGERNYHIFYALLAGLDQGEREEFYLSLPENYHYLNQSGCTEDKTISDQESFRQVITAMEVMQFSKEEVREVLRLLAGILHLGNIEFITAGGAQIPFKTALGRSADLLGLDPTQLTDALTQRSMILRGEEILTPLSVQQAVDSRDSLAMALYARCFEWVIKKINSRIKGKDDFKSIGILDIFGFENFEVNHFEQFNINYANEKLQEYFNKHIFSLEQLEYSREGLVWEDIDWIDNGECLDLIEKKLGLLALINEESHFPQATDSTLLEKLHSQHANNHFYVKPRVAVNNFGVKHYAGEVQYDVRGILEKNRDTFRDDLLNLLRESRFDFIYDLFEHVSSRNNQDTLKCGSKHRRPTVSSQFKDSLHSLMATLSSSNPFFVRCIKPNTQKMPDQFDQVVVLNQLRYSGMLETVRIRKAGYAVRRPFQDFYKRYKVLMRNLALPDDIRGKCTVLLQVYDASNSEWQLGKTKVFLRESLEQKLEKRREEEIDRAAMVIRAHILGYLARKQYRKVLCGVVTIQKNYRAFLARKKFLHLKKAAIVFQKQLRGQLARRVYRQLLAEKRELEEKKRREEEKKREEEERERERAQREADLLRAHQEAETRRQQELEALQKSQREADLTRELEKQRENKQVEEILRLEKEIEDLQRMKERQELSLTEASLQKLQQLRDEELRRLEDEACRAAQEFLESLNFDEIDECVRNIERSLSVGSEISGEELSELAESASGEKPNFNFSQPYPAEEEVDEGFEADDDAFKDSPNPSEHGHSDQRTSGIRTSDDSSEEDPYMNYTVVPTSPSADSTVLLAASMQDSASLHNSSSGESTYCMPQNNGDLPSPDGDYDYDQDDYEDGAITSGSSVTFSNSYGSQWSPDYRYSVGTYNSSGAYRFSSEGAQSSFEDSEEDFDSRFDTDDELSYRRDSVYSCVTLPYFHSFLYMKGGLMNSWKRRWCVLKDETFLWFRSKQEALKQGWLHKKGGGSSTLSRRNWKKRWFVLRQSKLMYFENDSEEKLKGTVEVRTAKEIIDNTSKENGIDIILADRTFHLIAESPEDASQWFSVLSQVHSSTDQEIREMHDEQANPQNAVGTLDVGLIDSVCASDSPDRPNSFVIITANRVLHCNADTPEEMHHWITLLQRSKGDTRVEGQEFIVRGWLHKEVKNSPKMSSLKLKKRWFVLTHNSLDYYKSSEKNALKLGTLVLNSLCSVVPPDEKIFKETGYWNVTVYGRKHCYRLYTKLLNEATRWSSAIQNVTDTKAPIDTPTQQLIQDIKENCLNSDVVEQIYKRNPILRYTHHPLHSPLLPLPYGDINLNLLKDKGYTTLQDEAIKIFNSLQQLESMSDPIPIIQGILQTGHDLRPLRDELYCQLIKQTNKVPHPGSVGNLYSWQILTCLSCTFLPSRGILKYLKFHLKRIREQFPGTEMEKYALFIYESLKKTKCREFVPSRDEIEALIHRQEMTSTVYCHGGGSCKITINSHTTAGEVVEKLIRGLAMEDSRNMFALFEYNGQVDKAIESRTIVADVLAKFEKLAATSEAGDAPWKFYFKLYCFLDTDSMPKDSVEFAFMFEQAHEAVIHGHHPAPEESLQVLAALRLQYLQGDYTPHTSIPPLEEVYSVQRLRARISQSTKTFTPYERLEKRRTSFLEGTLRRSFRTGSVVRQKAEEEQMLDMWIKEEVCSARTSIIDKWKKLQGMNQEQAMAKYMALIKEWPGYGSTLFDVECKEGGFPQELWLGVSADAVSVYKRGEGKPLEVFQYEHILSFGAPLANTYKIVVDERELLFETSEVVDVAKLMKAYISMIVKKRYSTTRSVSSQGSSR.

Residue M1 is modified to N-acetylmethionine. The Myosin motor domain maps to 63 to 739 (EGVDDMASLA…LEQKLEKRRE (677 aa)). Residues N104, Y113, 160 to 165 (GAGKTE), and N215 contribute to the ATP site. The tract at residues 619–641 (LHSLMATLSSSNPFFVRCIKPNT) is actin-binding. 3 consecutive IQ domains span residues 742-771 (IDRA…GVVT), 765-794 (VLCG…AAIV), and 788-817 (LKKA…EKRE). The interval 814 to 882 (EKRELEEKKR…LTRELEKQRE (69 aa)) is SAH. Residues 822-844 (KRREEEKKREEEERERERAQREA) form a disordered region. Positions 883-933 (NKQVEEILRLEKEIEDLQRMKERQELSLTEASLQKLQQLRDEELRRLEDEA) form a coiled coil. Residues S961, S964, and S967 each carry the phosphoserine modification. 2 disordered regions span residues 963–1047 (GSEI…VVPT) and 1062–1089 (QDSA…LPSP). A compositionally biased stretch (acidic residues) spans 993 to 1007 (AEEEVDEGFEADDDA). Positions 1062 to 1085 (QDSASLHNSSSGESTYCMPQNNGD) are enriched in polar residues. A Phosphothreonine modification is found at T1162. PH domains are found at residues 1216 to 1314 (EALK…QVHS) and 1396 to 1501 (EFIV…NVTD). The MyTH4 domain occupies 1551 to 1699 (LPYGDINLNL…PSRDEIEALI (149 aa)). An FERM domain is found at 1704–2048 (MTSTVYCHGG…AYISMIVKKR (345 aa)).

The protein belongs to the TRAFAC class myosin-kinesin ATPase superfamily. Myosin family. Monomer, when in an inactive conformation in the cytosol. Homodimer in its active, membrane-bound conformation; antiparallel coiled coil-mediated dimer formation. Interacts with ECPAS. Interacts with DCC and ITGB5; the presence of DCC inhibits ITGB5 binding. Interacts with tubulin; ITGB5 or DCC binding inhibits tubulin binding. Interacts strongly with CALM3 and weakly with CALM, the CALM3 interaction is essential for function in filopodial extension and motility. Interacts with ITGB1, ITGB3 and ITGB5. Interacts with NEO1. Interacts with VASP. In terms of processing, the initiator methionine for isoform Headless is removed. In terms of tissue distribution, detected in brain, heart, kidney, liver, stomach, skeletal muscle, lung, testis and skin. Isoform Headless is expressed in embryonic and neuronal stem cells, and enriched in proliferating and migrating cells.

The protein resides in the cytoplasm. The protein localises to the cytosol. It localises to the cell projection. It is found in the lamellipodium. Its subcellular location is the ruffle. The protein resides in the cytoskeleton. The protein localises to the filopodium tip. It localises to the cell cortex. It is found in the filopodium membrane. Functionally, myosins are actin-based motor molecules with ATPase activity. Unconventional myosins serve in intracellular movements. MYO10 binds to actin filaments and actin bundles and functions as a plus end-directed motor. Moves with higher velocity and takes larger steps on actin bundles than on single actin filaments. The tail domain binds to membranous compartments containing phosphatidylinositol 3,4,5-trisphosphate or integrins, and mediates cargo transport along actin filaments. Regulates cell shape, cell spreading and cell adhesion. Stimulates the formation and elongation of filopodia. In hippocampal neurons it induces the formation of dendritic filopodia by trafficking the actin-remodeling protein VASP to the tips of filopodia, where it promotes actin elongation. Plays a role in formation of the podosome belt in osteoclasts. In terms of biological role, functions as a dominant-negative regulator of isoform 1, suppressing its filopodia-inducing and axon outgrowth-promoting activities. In hippocampal neurons, it increases VASP retention in spine heads to induce spine formation and spine head expansion. The chain is Unconventional myosin-X (Myo10) from Mus musculus (Mouse).